We begin with the raw amino-acid sequence, 131 residues long: Profilin-2 (131 aa).

The protein belongs to the profilin family. As to quaternary structure, occurs in many kinds of cells as a complex with monomeric actin in a 1:1 ratio. Expressed in vascular bundles of roots, hypocotyls, cotyledons, leaves, sepals, petals, stamen filaments and stalks of developing seeds. Expressed in leaf epidermal cells, trichomes and stem epidermal cells. Detected in phloem exudates (at protein level).

The protein localises to the cytoplasm. It localises to the cytoskeleton. It is found in the endoplasmic reticulum. The protein resides in the cytosol. Its subcellular location is the nucleus. Functionally, binds to actin monomers and regulates the organization of the actin cytoskeleton. At high concentrations, profilin prevents the polymerization of actin, whereas it enhances it at low concentrations. At low concentrations, associates with the poly-proline motif of formins to enhance actin filament elongation rate. Binds G-actin and poly-L-proline with low affinity in vitro. Binds ACT1, ACT7 and ACT11 and inhibits actin polymerization. May be involved in the cross-talk between vesicular trafficking and the actin cytoskeleton. Inhibits cell growth of various pathogenic fungal strains. May play a role as antifungal proteins in the defense system against fungal pathogen attacks. The protein is Profilin-2 of Arabidopsis thaliana (Mouse-ear cress).